A 297-amino-acid chain; its full sequence is Homoserine kinase (297 aa).

Residue 85–95 (PPTRGMGSSSA) participates in ATP binding.

The protein belongs to the GHMP kinase family. Homoserine kinase subfamily.

Its subcellular location is the cytoplasm. It carries out the reaction L-homoserine + ATP = O-phospho-L-homoserine + ADP + H(+). It functions in the pathway amino-acid biosynthesis; L-threonine biosynthesis; L-threonine from L-aspartate: step 4/5. In terms of biological role, catalyzes the ATP-dependent phosphorylation of L-homoserine to L-homoserine phosphate. The sequence is that of Homoserine kinase from Desulfitobacterium hafniense (strain DSM 10664 / DCB-2).